A 358-amino-acid chain; its full sequence is Probable isocitrate dehydrogenase [NAD] subunit alpha, mitochondrial (358 aa).

Substrate-binding residues include R108, R118, R139, and D226. Mg(2+) is bound by residues D226, D250, and D254.

Belongs to the isocitrate and isopropylmalate dehydrogenases family. Heterooligomer of subunits alpha, beta, and gamma in the apparent ratio of 2:1:1. It depends on Mg(2+) as a cofactor. Mn(2+) is required as a cofactor.

It localises to the mitochondrion. It catalyses the reaction D-threo-isocitrate + NAD(+) = 2-oxoglutarate + CO2 + NADH. The polypeptide is Probable isocitrate dehydrogenase [NAD] subunit alpha, mitochondrial (idha-1) (Caenorhabditis elegans).